The following is a 63-amino-acid chain: uncharacterized protein (63 aa).

The chain crosses the membrane as a helical span at residues 38-58 (ISLFIILHLCLLVCLLLSFYF).

It is found in the membrane. This is an uncharacterized protein from Saccharomyces cerevisiae (strain ATCC 204508 / S288c) (Baker's yeast).